Consider the following 162-residue polypeptide: Peptide deformylase (162 aa).

Fe cation contacts are provided by cysteine 91 and histidine 133. Glutamate 134 is an active-site residue. Histidine 137 contributes to the Fe cation binding site.

Belongs to the polypeptide deformylase family. Fe(2+) serves as cofactor.

It catalyses the reaction N-terminal N-formyl-L-methionyl-[peptide] + H2O = N-terminal L-methionyl-[peptide] + formate. Its function is as follows. Removes the formyl group from the N-terminal Met of newly synthesized proteins. Requires at least a dipeptide for an efficient rate of reaction. N-terminal L-methionine is a prerequisite for activity but the enzyme has broad specificity at other positions. The protein is Peptide deformylase of Finegoldia magna (strain ATCC 29328 / DSM 20472 / WAL 2508) (Peptostreptococcus magnus).